Here is a 304-residue protein sequence, read N- to C-terminus: UDP-3-O-acyl-N-acetylglucosamine deacetylase (304 aa).

Residues histidine 78, histidine 237, and aspartate 241 each coordinate Zn(2+). The Proton donor role is filled by histidine 264.

Belongs to the LpxC family. Zn(2+) is required as a cofactor.

It catalyses the reaction a UDP-3-O-[(3R)-3-hydroxyacyl]-N-acetyl-alpha-D-glucosamine + H2O = a UDP-3-O-[(3R)-3-hydroxyacyl]-alpha-D-glucosamine + acetate. It participates in glycolipid biosynthesis; lipid IV(A) biosynthesis; lipid IV(A) from (3R)-3-hydroxytetradecanoyl-[acyl-carrier-protein] and UDP-N-acetyl-alpha-D-glucosamine: step 2/6. Its function is as follows. Catalyzes the hydrolysis of UDP-3-O-myristoyl-N-acetylglucosamine to form UDP-3-O-myristoylglucosamine and acetate, the committed step in lipid A biosynthesis. The protein is UDP-3-O-acyl-N-acetylglucosamine deacetylase of Methylococcus capsulatus (strain ATCC 33009 / NCIMB 11132 / Bath).